The following is a 149-amino-acid chain: Large ribosomal subunit protein bL9 (149 aa).

It belongs to the bacterial ribosomal protein bL9 family.

In terms of biological role, binds to the 23S rRNA. The chain is Large ribosomal subunit protein bL9 from Leptospira borgpetersenii serovar Hardjo-bovis (strain JB197).